The primary structure comprises 213 residues: N-(5'-phosphoribosyl)anthranilate isomerase (213 aa).

Belongs to the TrpF family.

The catalysed reaction is N-(5-phospho-beta-D-ribosyl)anthranilate = 1-(2-carboxyphenylamino)-1-deoxy-D-ribulose 5-phosphate. Its pathway is amino-acid biosynthesis; L-tryptophan biosynthesis; L-tryptophan from chorismate: step 3/5. The protein is N-(5'-phosphoribosyl)anthranilate isomerase of Methylibium petroleiphilum (strain ATCC BAA-1232 / LMG 22953 / PM1).